The chain runs to 189 residues: Keratin-associated protein 5-2 (189 aa).

8 repeat units span residues Cys21–Pro24, Cys27–Pro30, Cys33–Pro36, Cys134–Pro137, Cys144–Pro147, Cys159–Pro162, Cys169–Pro172, and Cys179–Pro182. Residues Cys27 to Pro182 are 8 X 4 AA repeats of C-C-X-P.

It belongs to the KRTAP type 5 family. As to quaternary structure, interacts with hair keratins.

Its function is as follows. In the hair cortex, hair keratin intermediate filaments are embedded in an interfilamentous matrix, consisting of hair keratin-associated protein (KRTAP), which are essential for the formation of a rigid and resistant hair shaft through their extensive disulfide bond cross-linking with abundant cysteine residues of hair keratins. The matrix proteins include the high-sulfur and high-glycine-tyrosine keratins. The sequence is that of Keratin-associated protein 5-2 from Mus musculus (Mouse).